The following is a 578-amino-acid chain: Proline--tRNA ligase (578 aa).

The protein belongs to the class-II aminoacyl-tRNA synthetase family. ProS type 1 subfamily. Homodimer.

The protein localises to the cytoplasm. The enzyme catalyses tRNA(Pro) + L-proline + ATP = L-prolyl-tRNA(Pro) + AMP + diphosphate. Catalyzes the attachment of proline to tRNA(Pro) in a two-step reaction: proline is first activated by ATP to form Pro-AMP and then transferred to the acceptor end of tRNA(Pro). As ProRS can inadvertently accommodate and process non-cognate amino acids such as alanine and cysteine, to avoid such errors it has two additional distinct editing activities against alanine. One activity is designated as 'pretransfer' editing and involves the tRNA(Pro)-independent hydrolysis of activated Ala-AMP. The other activity is designated 'posttransfer' editing and involves deacylation of mischarged Ala-tRNA(Pro). The misacylated Cys-tRNA(Pro) is not edited by ProRS. This Brachyspira hyodysenteriae (strain ATCC 49526 / WA1) protein is Proline--tRNA ligase.